Reading from the N-terminus, the 390-residue chain is Phosphopentomutase (390 aa).

Residues aspartate 11, aspartate 283, histidine 288, aspartate 324, histidine 325, and histidine 336 each contribute to the Mn(2+) site.

This sequence belongs to the phosphopentomutase family. Requires Mn(2+) as cofactor.

It localises to the cytoplasm. It carries out the reaction 2-deoxy-alpha-D-ribose 1-phosphate = 2-deoxy-D-ribose 5-phosphate. The enzyme catalyses alpha-D-ribose 1-phosphate = D-ribose 5-phosphate. Its pathway is carbohydrate degradation; 2-deoxy-D-ribose 1-phosphate degradation; D-glyceraldehyde 3-phosphate and acetaldehyde from 2-deoxy-alpha-D-ribose 1-phosphate: step 1/2. In terms of biological role, isomerase that catalyzes the conversion of deoxy-ribose 1-phosphate (dRib-1-P) and ribose 1-phosphate (Rib-1-P) to deoxy-ribose 5-phosphate (dRib-5-P) and ribose 5-phosphate (Rib-5-P), respectively. The protein is Phosphopentomutase of Clostridium novyi (strain NT).